A 415-amino-acid polypeptide reads, in one-letter code: Amino acid decarboxylase lolD2 (415 aa).

Residue Lys-62 is modified to N6-(pyridoxal phosphate)lysine. Residues Ser-194, Gly-231, and 266-269 each bind pyridoxal 5'-phosphate; that span reads EPGT. A substrate-binding site is contributed by 315-316; that stretch reads IV. Cys-351 serves as the catalytic Proton donor; shared with dimeric partner. At Cys-351 the chain carries S-nitrosocysteine. Asp-352 lines the substrate pocket. Tyr-381 is a pyridoxal 5'-phosphate binding site.

The protein belongs to the Orn/Lys/Arg decarboxylase class-II family. In terms of assembly, homodimer. The cofactor is pyridoxal 5'-phosphate.

The protein operates within alkaloid biosynthesis. In terms of biological role, amino acid decarboxylase; part of the gene cluster that mediates the biosynthesis of loline alkaloids, potent insecticidal agents composed of a pyrrolizidine ring system and an uncommon ether bridge linking carbons 2 and 7. Lolines are structurally differentiated by the various modifications of the L-amino group and include norloline, loline, N-methylloline, N-acetylloline, N-acetylnorloline, and N-formylloline. The first committed step is the condensation of O-acetyl-L-homoserine (derived from L-aspartic acid) and L-proline, probably catalyzed by the gamma-type pyridoxal 5'-phosphate(PLP)-dependent enzyme lolC, to give the diamino diacid, NACPP. Ensuing cyclization, decarboxylation, and acetylation steps yield 1-exo-acetamidopyrrolizidine (AcAP). LolO is required for installation of the ether bridge upon the pathway intermediate, 1-exo-acetamidopyrrolizidine (AcAP). In sequential 2-oxoglutarate- and O(2)-consuming steps, lolO removes hydrogens from C2 and C7 of AcAP to form both carbon-oxygen bonds in N-acetylnorloline (NANL), the precursor to all other lolines. The enzymes lolD, lolE, lolF and lolT have also been proposed to be involved in the ether-bridge installation. Further processing of the exocyclic moiety of NANL by fungal N-acetamidase (LolN), methyltransferase (LolM), and cytochrome P450 (LolP) enzymes, with occasional involvement of a plant acetyltransferase, generates the other known lolines. LolN transforms NANL to norlonine which is monomethylated and dimethylated to respectively lonine and N-methyllonine (NML) by lolM. LolP catalyzes hydroxylation of the methyl group in N-methylloline (NML) and further oxygenation to N-formylloline (NFL). A plant acetyltransferase is responsible for the acetylation of loline to form N-acetylloline (NAL). LolA might interact with aspartate kinase to prevent feedback inhibition of its activity by these end products and thereby promote production of L-homoserine from L-aspartate. The polypeptide is Amino acid decarboxylase lolD2 (Epichloe uncinata (Endophyte fungus)).